A 243-amino-acid chain; its full sequence is F-box protein pof15 (243 aa).

Residues 28–73 (QTSSTLLPVEVIDSVMQYLPAHDVIQSSFASYPLTLIANKIIRARL) enclose the F-box domain.

It participates in protein modification; protein ubiquitination. In terms of biological role, probable substrate recognition component of a SCF (SKP1-CUL1-F-box protein) E3 ubiquitin-protein ligase complex that mediates the ubiquitination and subsequent proteasomal degradation of target proteins. The chain is F-box protein pof15 (pof15) from Schizosaccharomyces pombe (strain 972 / ATCC 24843) (Fission yeast).